The primary structure comprises 215 residues: FMN-dependent NADH:quinone oxidoreductase (215 aa).

Position 17 to 19 (17 to 19 (SAS)) interacts with FMN.

This sequence belongs to the azoreductase type 1 family. Homodimer. FMN serves as cofactor.

The enzyme catalyses 2 a quinone + NADH + H(+) = 2 a 1,4-benzosemiquinone + NAD(+). It catalyses the reaction N,N-dimethyl-1,4-phenylenediamine + anthranilate + 2 NAD(+) = 2-(4-dimethylaminophenyl)diazenylbenzoate + 2 NADH + 2 H(+). Its function is as follows. Quinone reductase that provides resistance to thiol-specific stress caused by electrophilic quinones. Functionally, also exhibits azoreductase activity. Catalyzes the reductive cleavage of the azo bond in aromatic azo compounds to the corresponding amines. This Clostridium botulinum (strain Alaska E43 / Type E3) protein is FMN-dependent NADH:quinone oxidoreductase.